The chain runs to 320 residues: Ferrochelatase (320 aa).

Residues histidine 194 and glutamate 275 each contribute to the Fe cation site.

This sequence belongs to the ferrochelatase family. As to quaternary structure, monomer.

The protein resides in the cytoplasm. The catalysed reaction is heme b + 2 H(+) = protoporphyrin IX + Fe(2+). It functions in the pathway porphyrin-containing compound metabolism; protoheme biosynthesis; protoheme from protoporphyrin-IX: step 1/1. Its function is as follows. Catalyzes the ferrous insertion into protoporphyrin IX. This chain is Ferrochelatase, found in Escherichia coli (strain K12 / MC4100 / BW2952).